The chain runs to 1427 residues: DNA-directed RNA polymerase subunit beta' (1427 aa).

Zn(2+) contacts are provided by C70, C72, C85, and C88. Residues D461, D463, and D465 each coordinate Mg(2+). Zn(2+) contacts are provided by C838, C912, C919, and C922.

Belongs to the RNA polymerase beta' chain family. In terms of assembly, the RNAP catalytic core consists of 2 alpha, 1 beta, 1 beta' and 1 omega subunit. When a sigma factor is associated with the core the holoenzyme is formed, which can initiate transcription. Mg(2+) serves as cofactor. The cofactor is Zn(2+).

It catalyses the reaction RNA(n) + a ribonucleoside 5'-triphosphate = RNA(n+1) + diphosphate. DNA-dependent RNA polymerase catalyzes the transcription of DNA into RNA using the four ribonucleoside triphosphates as substrates. This is DNA-directed RNA polymerase subunit beta' from Sorangium cellulosum (strain So ce56) (Polyangium cellulosum (strain So ce56)).